The following is a 211-amino-acid chain: Small ribosomal subunit protein uS3 (211 aa).

A KH type-2 domain is found at 16-85; that stretch reads IDEYFKTKLV…NPQIEVKQVE (70 aa).

Belongs to the universal ribosomal protein uS3 family. Part of the 30S ribosomal subunit.

Its function is as follows. Binds the lower part of the 30S subunit head. The chain is Small ribosomal subunit protein uS3 from Methanococcus maripaludis (strain C7 / ATCC BAA-1331).